The chain runs to 498 residues: Putative antiporter subunit mnhD2 (498 aa).

Transmembrane regions (helical) follow at residues L2–F22, Y32–V52, L78–F98, Y108–S128, L130–L150, I161–L181, I209–L229, L240–F260, I271–I291, I308–F328, L330–I350, F368–G388, G403–F423, and G450–L470.

This sequence belongs to the CPA3 antiporters (TC 2.A.63) subunit D family. In terms of assembly, may form a heterooligomeric complex that consists of seven subunits: mnhA2, mnhB2, mnhC2, mnhD2, mnhE2, mnhF2 and mnhG2.

It is found in the cell membrane. The sequence is that of Putative antiporter subunit mnhD2 (mnhD2) from Staphylococcus aureus (strain MRSA252).